The chain runs to 243 residues: 6-carboxyhexanoate--CoA ligase (243 aa).

It belongs to the BioW family. Homodimer. Mg(2+) is required as a cofactor.

It catalyses the reaction heptanedioate + ATP + CoA = 6-carboxyhexanoyl-CoA + AMP + diphosphate. Its pathway is metabolic intermediate metabolism; pimeloyl-CoA biosynthesis; pimeloyl-CoA from pimelate: step 1/1. In terms of biological role, catalyzes the transformation of pimelate into pimeloyl-CoA with concomitant hydrolysis of ATP to AMP. This chain is 6-carboxyhexanoate--CoA ligase, found in Corynebacterium pseudotuberculosis (strain FRC41).